The following is a 191-amino-acid chain: Protein GrpE (191 aa).

This sequence belongs to the GrpE family. Homodimer.

Its subcellular location is the cytoplasm. Functionally, participates actively in the response to hyperosmotic and heat shock by preventing the aggregation of stress-denatured proteins, in association with DnaK and GrpE. It is the nucleotide exchange factor for DnaK and may function as a thermosensor. Unfolded proteins bind initially to DnaJ; upon interaction with the DnaJ-bound protein, DnaK hydrolyzes its bound ATP, resulting in the formation of a stable complex. GrpE releases ADP from DnaK; ATP binding to DnaK triggers the release of the substrate protein, thus completing the reaction cycle. Several rounds of ATP-dependent interactions between DnaJ, DnaK and GrpE are required for fully efficient folding. The sequence is that of Protein GrpE from Listeria monocytogenes serotype 1/2a (strain 10403S).